A 1235-amino-acid polypeptide reads, in one-letter code: N-acetylglucosamine-1-phosphotransferase subunits alpha/beta (1235 aa).

The helical transmembrane segment at 22–42 threads the bilayer; that stretch reads VCFVGVVVTIVSAFQFGEVVL. 4 N-linked (GlcNAc...) asparagine glycosylation sites follow: N83, N114, N148, and N179. Intrachain disulfides connect C438–C461, C452–C468, C505–C528, and C519–C535. LNR repeat units lie at residues 438-473 and 505-545; these read CAEG…GNTA and CNQG…ELYK. Ca(2+)-binding residues include D449, D464, D467, D516, D531, and D534. N-linked (GlcNAc...) asparagine glycosylation is found at N614 and N729. Positions 699 to 823 constitute a DMAP1-binding domain; that stretch reads NISLLPKEAQ…AQPTLGVTVS (125 aa). Disordered regions lie at residues 751–783 and 830–850; these read QART…HRSE and LIVP…AEGN. Residues 837–848 show a composition bias toward basic and acidic residues; the sequence is HLPKEEESDRAE. Residues 984-1019 enclose the EF-hand domain; the sequence is VQPLNISQVFHEVDTDQSGVLSDREIRTLATRIHDL. A glycan (N-linked (GlcNAc...) asparagine) is linked at N988. Ca(2+)-binding residues include D997, D999, S1001, and E1008. N1108 is a glycosylation site (N-linked (GlcNAc...) asparagine). The chain crosses the membrane as a helical span at residues 1194-1214; the sequence is VLATLIIFTIFSFFAEQIIAL.

Belongs to the stealth family. As to quaternary structure, hexamer of two alpha, two beta and two gamma (GNPTG) subunits; disulfide-linked. The alpha and/or the beta subunits of the enzyme constitute the catalytic subunits. Interacts with LYSET; facilitates proper localization of GNPTAB. The alpha- and beta-subunits are generated by a proteolytic cleavage by MBTPS1 protease at the Lys-907-Asp-908 bond.

It localises to the golgi apparatus membrane. The catalysed reaction is N(4)-[alpha-D-mannosyl-(1-&gt;2)-alpha-D-mannosyl-(glycan)]-L-asparaginyl-[protein] + UDP-N-acetyl-alpha-D-glucosamine = N(4)-[6-(N-acetyl-alpha-D-glucosaminyl-1-phospho)-alpha-D-mannosyl-(1-&gt;2)-alpha-D-mannosyl-(glycan)]-L-asparaginyl-[protein] + UMP + H(+). In terms of biological role, catalyzes the formation of mannose 6-phosphate (M6P) markers on high mannose type oligosaccharides in the Golgi apparatus. M6P residues are required to bind to the M6P receptors (MPR), which mediate the vesicular transport of lysosomal enzymes to the endosomal/prelysosomal compartment. This Mus musculus (Mouse) protein is N-acetylglucosamine-1-phosphotransferase subunits alpha/beta (Gnptab).